We begin with the raw amino-acid sequence, 204 residues long: ATP phosphoribosyltransferase (204 aa).

Belongs to the ATP phosphoribosyltransferase family. Short subfamily. Heteromultimer composed of HisG and HisZ subunits.

The protein localises to the cytoplasm. It catalyses the reaction 1-(5-phospho-beta-D-ribosyl)-ATP + diphosphate = 5-phospho-alpha-D-ribose 1-diphosphate + ATP. It participates in amino-acid biosynthesis; L-histidine biosynthesis; L-histidine from 5-phospho-alpha-D-ribose 1-diphosphate: step 1/9. In terms of biological role, catalyzes the condensation of ATP and 5-phosphoribose 1-diphosphate to form N'-(5'-phosphoribosyl)-ATP (PR-ATP). Has a crucial role in the pathway because the rate of histidine biosynthesis seems to be controlled primarily by regulation of HisG enzymatic activity. This Hydrogenobaculum sp. (strain Y04AAS1) protein is ATP phosphoribosyltransferase.